Consider the following 201-residue polypeptide: Molybdenum cofactor guanylyltransferase (201 aa).

Residues 14–16 (LAG), Lys-31, and Asp-104 each bind GTP. Asp-104 serves as a coordination point for Mg(2+).

The protein belongs to the MobA family. Monomer. Mg(2+) serves as cofactor.

Its subcellular location is the cytoplasm. The catalysed reaction is Mo-molybdopterin + GTP + H(+) = Mo-molybdopterin guanine dinucleotide + diphosphate. Functionally, transfers a GMP moiety from GTP to Mo-molybdopterin (Mo-MPT) cofactor (Moco or molybdenum cofactor) to form Mo-molybdopterin guanine dinucleotide (Mo-MGD) cofactor. The sequence is that of Molybdenum cofactor guanylyltransferase from Helicobacter pylori (strain P12).